The chain runs to 92 residues: FMRFamide-like neuropeptides 16 (92 aa).

The N-terminal stretch at 1–24 (MNFSGFEFSSIVAFFLLILQLSTA) is a signal peptide. The propeptide occupies 25 to 55 (AVLPADYAYGVADEMSALPDSGSLFAEQRPS). A phenylalanine amide mark is found at phenylalanine 64, phenylalanine 74, and phenylalanine 84. Residues 87–92 (SAPFEQ) constitute a propeptide that is removed on maturation.

It belongs to the FARP (FMRFamide related peptide) family. In terms of tissue distribution, each flp gene is expressed in a distinct set of neurons.

The protein localises to the secreted. Functionally, FMRFamides and FMRFamide-like peptides are neuropeptides. AQTFVRF-amide inhibits the activity of dissected pharyngeal myogenic muscle system. This Caenorhabditis elegans protein is FMRFamide-like neuropeptides 16.